Reading from the N-terminus, the 745-residue chain is MSEVQSSAPAESWFGRFSNKILSLRGASYVVGALGLCALLAATMVTLSLNEQMIVALVCVAVFFIVGRRKSRRTQVFLEVLSALVSLRYLTWRLTETLDFDTWTQGILGVTLLLAELYALYMLFLSYFQTISPLHRAPLPLPANPDEWPTVDIFIPTYDEALSIVRLTVLGALGIDWPPDKVNVYILDDGRREEFARFAEACGARYIARPDNAHAKAGNLNYAIKHTTGDHILILDCDHIPTRAFLQISMGWMVSDSNIALLQTPHHFYSPDPFQRNLAVGYRTPPEGNLFYGVIQDGNDFWDATFFCGSCAILRRKAIEEIGGFATETVTEDAHTALRMQRKGWSTAYLRIPLASGLATERLITHIGQRMRWARGMIQIFRVDNPMLGSGLKLGQRLCYLSAMTSFFFAIPRVIFLASPLAFLFFSQNIIAASPLAVGVYAIPHMFHSIATAAKVNKGWRYSFWSEVYETVMALFLVRVTIVTMLFPSKGKFNVTEKGGVLEREEFDLTATYPNIIFAIIMALGLLRGLYALIFQHLDIISERAYALNCIWSVISLIILMAVISVGRETKQLRQSHRIEAQIPVTVYDYDGNSSHGITEDVSMGGVAIHLPWREVTPDHPVQVVIHAVLDGEEMNLPATMIRSAQGKAVFTWSISNIQVEAAVVRFVFGRADAWLQWNNYEDDRPLRSLWSLILSIKALFRRKGQMIAHSRPKKKPIALPVERREPTTSQGGQKQEGKISRAAS.

3 helical membrane-spanning segments follow: residues 29-49 (YVVG…TLSL), 106-126 (GILG…LFLS), and 153-173 (IFIP…LGAL). The tract at residues 147 to 240 (EWPTVDIFIP…HILILDCDHI (94 aa)) is catalytic subdomain A. Asp189 is an active-site residue. Residues Asp236 and Asp238 each coordinate substrate. Positions 317–377 (KAIEEIGGFA…GQRMRWARGM (61 aa)) are catalytic subdomain B. Asp333 is an active-site residue. Transmembrane regions (helical) follow at residues 407 to 427 (FFFA…LFFS), 430 to 450 (IIAA…FHSI), 468 to 488 (VYET…MLFP), 515 to 535 (NIIF…ALIF), 547 to 567 (ALNC…ISVG), and 649 to 669 (AVFT…RFVF). Residues 572-670 (QLRQSHRIEA…EAAVVRFVFG (99 aa)) form the PilZ domain. The segment covering 708 to 717 (IAHSRPKKKP) has biased composition (basic residues). Residues 708–745 (IAHSRPKKKPIALPVERREPTTSQGGQKQEGKISRAAS) are disordered. Residues 736 to 745 (QEGKISRAAS) show a composition bias toward basic and acidic residues.

The protein belongs to the glycosyltransferase 2 family. It depends on Mg(2+) as a cofactor.

Its subcellular location is the cell inner membrane. The catalysed reaction is [(1-&gt;4)-beta-D-glucosyl](n) + UDP-alpha-D-glucose = [(1-&gt;4)-beta-D-glucosyl](n+1) + UDP + H(+). Its pathway is glycan metabolism; bacterial cellulose biosynthesis. Its activity is regulated as follows. Activated by bis-(3'-5') cyclic diguanylic acid (c-di-GMP). Catalytic subunit of cellulose synthase. It polymerizes uridine 5'-diphosphate glucose to cellulose. The thick cellulosic mats generated by this enzyme probably provide a specialized protective environment to the bacterium. The sequence is that of Cellulose synthase 1 catalytic subunit [UDP-forming] (bcsAI) from Komagataeibacter xylinus (Gluconacetobacter xylinus).